Consider the following 197-residue polypeptide: Beta-crystallin A2 (197 aa).

The tract at residues 1-11 is N-terminal arm; that stretch reads MSSAPAPGPAP. Beta/gamma crystallin 'Greek key' domains follow at residues 12-52 and 53-99; these read ASLT…KVEN and GVWV…RPVL. The connecting peptide stretch occupies residues 100–105; sequence CANHND. Beta/gamma crystallin 'Greek key' domains follow at residues 106-147 and 148-196; these read SRVT…KVSS and GAWV…RRVQ.

It belongs to the beta/gamma-crystallin family. In terms of assembly, homo/heterodimer, or complexes of higher-order. The structure of beta-crystallin oligomers seems to be stabilized through interactions between the N-terminal arms.

Its function is as follows. Crystallins are the dominant structural components of the vertebrate eye lens. This Homo sapiens (Human) protein is Beta-crystallin A2 (CRYBA2).